The chain runs to 463 residues: Chromosomal replication initiator protein DnaA (463 aa).

The domain I, interacts with DnaA modulators stretch occupies residues 1-90 (MSLSLWQQCL…KPLSQIISQT (90 aa)). Residues 91–126 (VTASVSAPSAPIVRVAAPSRPSWDNAAPQPELSYRS) form a domain II region. The interval 127 to 343 (NVNPKHTFDN…GALNRVIANA (217 aa)) is domain III, AAA+ region. ATP contacts are provided by Gly-171, Gly-173, Lys-174, and Thr-175. The interval 344-463 (NFTGRAITID…FSNLIRTLSS (120 aa)) is domain IV, binds dsDNA.

This sequence belongs to the DnaA family. Oligomerizes as a right-handed, spiral filament on DNA at oriC.

It localises to the cytoplasm. Plays an essential role in the initiation and regulation of chromosomal replication. ATP-DnaA binds to the origin of replication (oriC) to initiate formation of the DNA replication initiation complex once per cell cycle. Binds the DnaA box (a 9 base pair repeat at the origin) and separates the double-stranded (ds)DNA. Forms a right-handed helical filament on oriC DNA; dsDNA binds to the exterior of the filament while single-stranded (ss)DNA is stabiized in the filament's interior. The ATP-DnaA-oriC complex binds and stabilizes one strand of the AT-rich DNA unwinding element (DUE), permitting loading of DNA polymerase. After initiation quickly degrades to an ADP-DnaA complex that is not apt for DNA replication. Binds acidic phospholipids. The protein is Chromosomal replication initiator protein DnaA of Serratia proteamaculans (strain 568).